Here is a 640-residue protein sequence, read N- to C-terminus: Threonine--tRNA ligase (640 aa).

A TGS domain is found at 1 to 59; the sequence is MKIKVKLPDGKEKEYDRGITPAEIAKELGVKKAIGAVVNGELWDLKRPIENDCELRLVT. Residues 240–531 form a catalytic region; the sequence is DHRKLGPHLE…LIEHFAGAFP (292 aa). The Zn(2+) site is built by cysteine 332, histidine 383, and histidine 508.

This sequence belongs to the class-II aminoacyl-tRNA synthetase family. In terms of assembly, homodimer. Requires Zn(2+) as cofactor.

The protein localises to the cytoplasm. The enzyme catalyses tRNA(Thr) + L-threonine + ATP = L-threonyl-tRNA(Thr) + AMP + diphosphate + H(+). Catalyzes the attachment of threonine to tRNA(Thr) in a two-step reaction: L-threonine is first activated by ATP to form Thr-AMP and then transferred to the acceptor end of tRNA(Thr). Also edits incorrectly charged L-seryl-tRNA(Thr). The chain is Threonine--tRNA ligase from Thermotoga petrophila (strain ATCC BAA-488 / DSM 13995 / JCM 10881 / RKU-1).